The sequence spans 280 residues: Acyl-[acyl-carrier-protein]--UDP-N-acetylglucosamine O-acyltransferase (280 aa).

This sequence belongs to the transferase hexapeptide repeat family. LpxA subfamily. Homotrimer.

The protein localises to the cytoplasm. The enzyme catalyses a (3R)-hydroxyacyl-[ACP] + UDP-N-acetyl-alpha-D-glucosamine = a UDP-3-O-[(3R)-3-hydroxyacyl]-N-acetyl-alpha-D-glucosamine + holo-[ACP]. It functions in the pathway glycolipid biosynthesis; lipid IV(A) biosynthesis; lipid IV(A) from (3R)-3-hydroxytetradecanoyl-[acyl-carrier-protein] and UDP-N-acetyl-alpha-D-glucosamine: step 1/6. In terms of biological role, involved in the biosynthesis of lipid A, a phosphorylated glycolipid that anchors the lipopolysaccharide to the outer membrane of the cell. In Chlamydia trachomatis serovar L2 (strain ATCC VR-902B / DSM 19102 / 434/Bu), this protein is Acyl-[acyl-carrier-protein]--UDP-N-acetylglucosamine O-acyltransferase.